The chain runs to 377 residues: Ribosomal RNA large subunit methyltransferase G (377 aa).

The protein belongs to the methyltransferase superfamily. RlmG family.

The protein resides in the cytoplasm. It carries out the reaction guanosine(1835) in 23S rRNA + S-adenosyl-L-methionine = N(2)-methylguanosine(1835) in 23S rRNA + S-adenosyl-L-homocysteine + H(+). Specifically methylates the guanine in position 1835 (m2G1835) of 23S rRNA. The polypeptide is Ribosomal RNA large subunit methyltransferase G (Aeromonas salmonicida (strain A449)).